Reading from the N-terminus, the 487-residue chain is MNCQKCRQPLRLDGSLEDLNPAAYDVLVASASPQTLKKSSVPNPPLAQPQDQSRKSIYDRVSRNAGPPTFKRNHGSHPRDSSMSFVLLSESQMARPTPSSDPPTTPTVLRRASSSKSNADNPDAPMGSEMDRINRLFDVLSARSDVDHPICVECTEMLVEGLQKKLEIASRERDSYAKHLKEAKANKPSEEDMKTQEEALRKAERDRAAAMEELKKLESEKTSLDEELVLLEEESRQLDKEEEKFWRERNDFATRMADFQAERDSINAKYSNDSQLLEKLQRSNVYNDTFCISHDGSFATINGLRLGRLSNKPVDWPEINAAWGHALLLLVTVADKLAYRFDGYDPQPMGSTSRIIRYEVPSPSSSRLGTRAASVPPKRHILELYSSGDMPLGLTFMHRRFDNAMVGFLELVRQLGAFVHRQTEATGTPLSLPYKIDGDKIGDVSIKLGIAQDDGWTKACKLTLTCCKFLLAHASNVTSNARNGGSQ.

Residues 33 to 129 (PQTLKKSSVP…DNPDAPMGSE (97 aa)) are disordered. Basic and acidic residues predominate over residues 52 to 62 (QSRKSIYDRVS). A compositionally biased stretch (polar residues) spans 81–94 (SSMSFVLLSESQMA). Positions 152–282 (VECTEMLVEG…DSQLLEKLQR (131 aa)) form a coiled coil. The segment at 283–480 (SNVYNDTFCI…LAHASNVTSN (198 aa)) is BARA. Positions 456–481 (WTKACKLTLTCCKFLLAHASNVTSNA) are required for membrane-association, autophagic function during starvation and normal autophagosome morphology.

Belongs to the beclin family. As to quaternary structure, component of the autophagy-specific VPS34 PI3-kinase complex I; and of the VPS34 PI3-kinase complex II.

It is found in the endosome membrane. The protein localises to the vacuole membrane. Its subcellular location is the preautophagosomal structure membrane. Functionally, required for cytoplasm to vacuole transport (Cvt), autophagy, nucleophagy, and mitophagy, as a part of the autophagy-specific VPS34 PI3-kinase complex I. This complex is essential to recruit the ATG8-phosphatidylinositol conjugate and the ATG12-ATG5 conjugate to the pre-autophagosomal structure. Also involved in endosome-to-Golgi retrograde transport as part of the VPS34 PI3-kinase complex II. Autophagy is required for proper vegetative growth, asexual/sexual reproduction, and full virulence. Autophagy is particularly involved in the biosynthesis of deoxynivalenol (DON), an important virulence determinant. The protein is Vacuolar protein sorting-associated protein 30 of Gibberella zeae (strain ATCC MYA-4620 / CBS 123657 / FGSC 9075 / NRRL 31084 / PH-1) (Wheat head blight fungus).